The following is a 1178-amino-acid chain: DNA-directed RNA polymerase subunit beta' (1178 aa).

Zn(2+) is bound by residues cysteine 60, cysteine 62, cysteine 75, and cysteine 78. Aspartate 450, aspartate 452, and aspartate 454 together coordinate Mg(2+). 4 residues coordinate Zn(2+): cysteine 795, cysteine 869, cysteine 876, and cysteine 879.

This sequence belongs to the RNA polymerase beta' chain family. In terms of assembly, the RNAP catalytic core consists of 2 alpha, 1 beta, 1 beta' and 1 omega subunit. When a sigma factor is associated with the core the holoenzyme is formed, which can initiate transcription. Requires Mg(2+) as cofactor. Zn(2+) serves as cofactor.

It carries out the reaction RNA(n) + a ribonucleoside 5'-triphosphate = RNA(n+1) + diphosphate. Functionally, DNA-dependent RNA polymerase catalyzes the transcription of DNA into RNA using the four ribonucleoside triphosphates as substrates. The protein is DNA-directed RNA polymerase subunit beta' of Clostridium perfringens (strain ATCC 13124 / DSM 756 / JCM 1290 / NCIMB 6125 / NCTC 8237 / Type A).